We begin with the raw amino-acid sequence, 181 residues long: Adenine phosphoribosyltransferase (181 aa).

It belongs to the purine/pyrimidine phosphoribosyltransferase family. Homodimer.

The protein resides in the cytoplasm. It catalyses the reaction AMP + diphosphate = 5-phospho-alpha-D-ribose 1-diphosphate + adenine. Its pathway is purine metabolism; AMP biosynthesis via salvage pathway; AMP from adenine: step 1/1. Functionally, catalyzes a salvage reaction resulting in the formation of AMP, that is energically less costly than de novo synthesis. The protein is Adenine phosphoribosyltransferase of Vibrio parahaemolyticus serotype O3:K6 (strain RIMD 2210633).